A 526-amino-acid chain; its full sequence is Na(+)/H(+) antiporter NhaB (526 aa).

12 helical membrane-spanning segments follow: residues 25–45, 52–72, 89–109, 130–164, 204–224, 242–262, 307–327, 350–370, 391–411, 448–468, 479–499, and 505–525; these read ILLF…IAGW, IFTL…LLAI, LVAN…IYFM, LSLA…FYAI, LMMH…VGEP, IRMS…CVLV, IALW…LIGL, QEAL…AVII, LALF…VFVG, VATP…LAPL, MALP…EMLL, and WFYQ…LPVL.

This sequence belongs to the NhaB Na(+)/H(+) (TC 2.A.34) antiporter family.

It localises to the cell inner membrane. It catalyses the reaction 2 Na(+)(in) + 3 H(+)(out) = 2 Na(+)(out) + 3 H(+)(in). In terms of biological role, na(+)/H(+) antiporter that extrudes sodium in exchange for external protons. The protein is Na(+)/H(+) antiporter NhaB of Aeromonas hydrophila subsp. hydrophila (strain ATCC 7966 / DSM 30187 / BCRC 13018 / CCUG 14551 / JCM 1027 / KCTC 2358 / NCIMB 9240 / NCTC 8049).